We begin with the raw amino-acid sequence, 430 residues long: Tol-Pal system protein TolB (430 aa).

The first 21 residues, 1–21, serve as a signal peptide directing secretion; the sequence is MKQALRVAFGFLILWASVLHA.

Belongs to the TolB family. The Tol-Pal system is composed of five core proteins: the inner membrane proteins TolA, TolQ and TolR, the periplasmic protein TolB and the outer membrane protein Pal. They form a network linking the inner and outer membranes and the peptidoglycan layer.

The protein localises to the periplasm. Functionally, part of the Tol-Pal system, which plays a role in outer membrane invagination during cell division and is important for maintaining outer membrane integrity. TolB occupies a key intermediary position in the Tol-Pal system because it communicates directly with both membrane-embedded components, Pal in the outer membrane and TolA in the inner membrane. The sequence is that of Tol-Pal system protein TolB from Escherichia coli O139:H28 (strain E24377A / ETEC).